A 32-amino-acid polypeptide reads, in one-letter code: Fibrinolytic enzyme (32 aa).

The N-terminus is blocked.

With respect to regulation, inhibited by phenylmethanesulfonyl fluoride (PMSF). Not inhibited by EDTA, EGTA, beta-mercaptoethanol, indoacetamide, benzamidine, aprotinin, pepstatin A and trypsin inhibitor. In terms of biological role, plasmin-like serine protease. Has fibrinolytic and fibrinogenolytic but not plasminogenolytic activity. Cleaves after Arg and Lys residues. In Hediste japonica (Polychaete worm), this protein is Fibrinolytic enzyme.